The primary structure comprises 350 residues: Biotin synthase (350 aa).

Residues 41–268 (NEVQISRLLS…KSRVRLSAGR (228 aa)) form the Radical SAM core domain. Residues Cys-56, Cys-60, and Cys-63 each coordinate [4Fe-4S] cluster. Residues Cys-100, Cys-131, Cys-191, and Arg-263 each contribute to the [2Fe-2S] cluster site.

The protein belongs to the radical SAM superfamily. Biotin synthase family. In terms of assembly, homodimer. Requires [4Fe-4S] cluster as cofactor. [2Fe-2S] cluster serves as cofactor.

It catalyses the reaction (4R,5S)-dethiobiotin + (sulfur carrier)-SH + 2 reduced [2Fe-2S]-[ferredoxin] + 2 S-adenosyl-L-methionine = (sulfur carrier)-H + biotin + 2 5'-deoxyadenosine + 2 L-methionine + 2 oxidized [2Fe-2S]-[ferredoxin]. It participates in cofactor biosynthesis; biotin biosynthesis; biotin from 7,8-diaminononanoate: step 2/2. In terms of biological role, catalyzes the conversion of dethiobiotin (DTB) to biotin by the insertion of a sulfur atom into dethiobiotin via a radical-based mechanism. The polypeptide is Biotin synthase (Shewanella frigidimarina (strain NCIMB 400)).